We begin with the raw amino-acid sequence, 76 residues long: Small ribosomal subunit protein bS18 (76 aa).

Belongs to the bacterial ribosomal protein bS18 family. Part of the 30S ribosomal subunit. Forms a tight heterodimer with protein bS6.

Its function is as follows. Binds as a heterodimer with protein bS6 to the central domain of the 16S rRNA, where it helps stabilize the platform of the 30S subunit. This Ectopseudomonas mendocina (strain ymp) (Pseudomonas mendocina) protein is Small ribosomal subunit protein bS18.